A 448-amino-acid polypeptide reads, in one-letter code: Na(+)-translocating NADH-quinone reductase subunit A (448 aa).

This sequence belongs to the NqrA family. As to quaternary structure, composed of six subunits; NqrA, NqrB, NqrC, NqrD, NqrE and NqrF.

The enzyme catalyses a ubiquinone + n Na(+)(in) + NADH + H(+) = a ubiquinol + n Na(+)(out) + NAD(+). Its function is as follows. NQR complex catalyzes the reduction of ubiquinone-1 to ubiquinol by two successive reactions, coupled with the transport of Na(+) ions from the cytoplasm to the periplasm. NqrA to NqrE are probably involved in the second step, the conversion of ubisemiquinone to ubiquinol. The chain is Na(+)-translocating NADH-quinone reductase subunit A from Alcanivorax borkumensis (strain ATCC 700651 / DSM 11573 / NCIMB 13689 / SK2).